The chain runs to 71 residues: Phenoloxidase 3 (71 aa).

Cu cation-binding residues include His3 and His29.

Belongs to the tyrosinase family. Requires Cu(2+) as cofactor. Upon activation, a trypsin type protease cleaves prophenol oxidase to yield the active enzyme. Hemocytes and plasma.

Its subcellular location is the secreted. The enzyme catalyses 2 L-dopa + O2 = 2 L-dopaquinone + 2 H2O. It catalyses the reaction L-tyrosine + O2 = L-dopaquinone + H2O. Its function is as follows. This is a copper-containing oxidase that functions in the formation of pigments such as melanins and other polyphenolic compounds. Catalyzes the rate-limiting conversions of tyrosine to DOPA, DOPA to DOPA-quinone and possibly 5,6 dihydroxyindole to indole-5'6 quinone. The sequence is that of Phenoloxidase 3 from Sarcophaga argyrostoma (Flesh fly).